The chain runs to 361 residues: tRNA 2-selenouridine synthase (361 aa).

Positions 12 to 135 (VLKNIPLIDV…FRRYLIDHLE (124 aa)) constitute a Rhodanese domain. The active-site S-selanylcysteine intermediate is the Cys-95.

Belongs to the SelU family. As to quaternary structure, monomer.

It carries out the reaction 5-methylaminomethyl-2-thiouridine(34) in tRNA + selenophosphate + (2E)-geranyl diphosphate + H2O + H(+) = 5-methylaminomethyl-2-selenouridine(34) in tRNA + (2E)-thiogeraniol + phosphate + diphosphate. It catalyses the reaction 5-methylaminomethyl-2-thiouridine(34) in tRNA + (2E)-geranyl diphosphate = 5-methylaminomethyl-S-(2E)-geranyl-thiouridine(34) in tRNA + diphosphate. The enzyme catalyses 5-methylaminomethyl-S-(2E)-geranyl-thiouridine(34) in tRNA + selenophosphate + H(+) = 5-methylaminomethyl-2-(Se-phospho)selenouridine(34) in tRNA + (2E)-thiogeraniol. The catalysed reaction is 5-methylaminomethyl-2-(Se-phospho)selenouridine(34) in tRNA + H2O = 5-methylaminomethyl-2-selenouridine(34) in tRNA + phosphate. Involved in the post-transcriptional modification of the uridine at the wobble position (U34) of tRNA(Lys), tRNA(Glu) and tRNA(Gln). Catalyzes the conversion of 2-thiouridine (S2U-RNA) to 2-selenouridine (Se2U-RNA). Acts in a two-step process involving geranylation of 2-thiouridine (S2U) to S-geranyl-2-thiouridine (geS2U) and subsequent selenation of the latter derivative to 2-selenouridine (Se2U) in the tRNA chain. The chain is tRNA 2-selenouridine synthase from Hydrogenovibrio crunogenus (strain DSM 25203 / XCL-2) (Thiomicrospira crunogena).